A 526-amino-acid polypeptide reads, in one-letter code: GMP synthase [glutamine-hydrolyzing] (526 aa).

The Glutamine amidotransferase type-1 domain maps to Arg10–Leu208. Cys87 functions as the Nucleophile in the catalytic mechanism. Residues His182 and Glu184 contribute to the active site. Residues Trp209 to Arg401 form the GMPS ATP-PPase domain. Ser236–Ser242 lines the ATP pocket.

In terms of assembly, homodimer.

The catalysed reaction is XMP + L-glutamine + ATP + H2O = GMP + L-glutamate + AMP + diphosphate + 2 H(+). It participates in purine metabolism; GMP biosynthesis; GMP from XMP (L-Gln route): step 1/1. In terms of biological role, catalyzes the synthesis of GMP from XMP. The protein is GMP synthase [glutamine-hydrolyzing] of Hydrogenovibrio crunogenus (strain DSM 25203 / XCL-2) (Thiomicrospira crunogena).